Consider the following 188-residue polypeptide: MTILQSILFVTGNKHKLADVKNILGDRFEIKNHDYDLPEIQGSVKEVVLEKCKAAAEIVKGPVLVEDTWLGYKAMNGLPGPYVKWFLNSVGPDGLYRMVSAFDTKEAQAGCTFGYTKGPGKPIHLFEGILDGQVVPPRGSNGFGWNSIFQPNGHKHTYAEMTDEERNSCSHRYLAAMKLRDFLESEKN.

Residue 11–16 (TGNKHK) coordinates ITP. Position 39 (Glu-39) interacts with Mg(2+). ITP contacts are provided by residues Lys-51, 67 to 68 (DT), Lys-84, 143 to 146 (FGWN), and 171 to 172 (HR).

It belongs to the HAM1 NTPase family. Homodimer. It depends on Mg(2+) as a cofactor. Mn(2+) is required as a cofactor.

Its subcellular location is the cytoplasm. It localises to the nucleus. The catalysed reaction is ITP + H2O = IMP + diphosphate + H(+). The enzyme catalyses dITP + H2O = dIMP + diphosphate + H(+). It catalyses the reaction XTP + H2O = XMP + diphosphate + H(+). Functionally, pyrophosphatase that hydrolyzes non-canonical purine nucleotides such as inosine triphosphate (ITP), deoxyinosine triphosphate (dITP) or xanthosine 5'-triphosphate (XTP) to their respective monophosphate derivatives. The enzyme does not distinguish between the deoxy- and ribose forms. Probably excludes non-canonical purines from RNA and DNA precursor pools, thus preventing their incorporation into RNA and DNA and avoiding chromosomal lesions. The polypeptide is Inosine triphosphate pyrophosphatase (Schizosaccharomyces pombe (strain 972 / ATCC 24843) (Fission yeast)).